Consider the following 175-residue polypeptide: Cell division protein SepF (175 aa).

The segment covering 20 to 29 has biased composition (acidic residues); the sequence is RYEDYDDYDD. Residues 20 to 88 form a disordered region; that stretch reads RYEDYDDYDD…ERPTPPLRVT (69 aa). Basic and acidic residues-rich tracts occupy residues 30 to 47 and 54 to 73; these read AEPH…DLGS and RRMD…RRVS.

The protein belongs to the SepF family. Homodimer. Interacts with FtsZ.

Its subcellular location is the cytoplasm. Its function is as follows. Cell division protein that is part of the divisome complex and is recruited early to the Z-ring. Probably stimulates Z-ring formation, perhaps through the cross-linking of FtsZ protofilaments. Its function overlaps with FtsA. This is Cell division protein SepF from Acidothermus cellulolyticus (strain ATCC 43068 / DSM 8971 / 11B).